Here is a 574-residue protein sequence, read N- to C-terminus: Lipase maturation factor 1 (574 aa).

Residues 1–39 are disordered; it reads MRPDSLVMAAPEGSLRKRKVGGAEHSPASQPSLARDPAD. Topologically, residues 1 to 49 are cytoplasmic; the sequence is MRPDSLVMAAPEGSLRKRKVGGAEHSPASQPSLARDPADSPARLHTGTF. Residues 50–72 traverse the membrane as a helical segment; sequence WLTRIVLLRALAFIYFVAFLVAF. Residues 73–127 are Lumenal-facing; sequence NQNKALIGDRGLLPCKLYLKNVQEYFQGSTGWAAWTYAPTIMWLLDWSDMNFNLD. Residues 128-151 form a helical membrane-spanning segment; the sequence is LIALLGLGISSFVLVTGCANMILM. Residues 152–207 lie on the Cytoplasmic side of the membrane; it reads TALWALYMSLVNVGQIWYSFGWESQLLETGFLGIFLSPLWTLSRLPKNTPTSQIVL. A helical membrane pass occupies residues 208–221; that stretch reads WGFRWLIFRIMLGA. Residues 222–292 are Lumenal-facing; that stretch reads GLIKVRGDKC…LGRRMRILHG (71 aa). A helical transmembrane segment spans residues 293–321; it reads VLQILFQVILIISGNLSFLNWLTIVPSLA. The Cytoplasmic segment spans residues 322–367; it reads CFDDAALGFLFPSGPQGLKKQVLEIQREDTQRVQPKPRDRGCLVRQ. Residues 368-388 form a helical membrane-spanning segment; the sequence is VVNISLGILVAWLSVPVVINL. Over 389-574 the chain is Lumenal; the sequence is LSSRQIMNTS…LPEPPSRHTR (186 aa).

The protein belongs to the lipase maturation factor family. Interacts with LPL and SEL1L. As to expression, expressed in all tissues synthesizing lipoprotein lipase (Lpl) and hepatic lipase (Lipc), including adipose tissue, skeletal muscle, heart, and liver. Expressed at higher levels in tissues that express little or no lipase activity such as testis and pancreas suggesting additional functions in these tissues.

It is found in the endoplasmic reticulum membrane. Its function is as follows. Involved in the maturation of specific proteins in the endoplasmic reticulum. Required for maturation and transport of active lipoprotein lipase (LPL) through the secretory pathway. Each LMF1 molecule chaperones 50 or more molecules of LPL. The polypeptide is Lipase maturation factor 1 (Lmf1) (Mus musculus (Mouse)).